The primary structure comprises 297 residues: Quinate/shikimate dehydrogenase (297 aa).

Lys-80 and Asp-116 together coordinate substrate. Residues Ala-141–Ala-144, Asn-164–Asp-167, Lys-214, Cys-241–Asn-244, and Gly-264 contribute to the NAD(+) site.

The protein belongs to the shikimate dehydrogenase family. As to quaternary structure, homodimer.

The catalysed reaction is L-quinate + NAD(+) = 3-dehydroquinate + NADH + H(+). It catalyses the reaction L-quinate + NADP(+) = 3-dehydroquinate + NADPH + H(+). It carries out the reaction shikimate + NADP(+) = 3-dehydroshikimate + NADPH + H(+). The enzyme catalyses shikimate + NAD(+) = 3-dehydroshikimate + NADH + H(+). The protein operates within metabolic intermediate biosynthesis; chorismate biosynthesis; chorismate from D-erythrose 4-phosphate and phosphoenolpyruvate: step 4/7. The actual biological function of YdiB remains unclear, nor is it known whether 3-dehydroshikimate or quinate represents the natural substrate. Catalyzes the reversible NAD-dependent reduction of both 3-dehydroshikimate (DHSA) and 3-dehydroquinate to yield shikimate (SA) and quinate, respectively. It can use both NAD or NADP for catalysis, however it has higher catalytic efficiency with NAD. The sequence is that of Quinate/shikimate dehydrogenase from Shigella dysenteriae serotype 1 (strain Sd197).